The following is a 169-amino-acid chain: Lipoprotein signal peptidase (169 aa).

4 helical membrane-spanning segments follow: residues 10 to 30, 41 to 61, 68 to 88, and 94 to 114; these read LPWL…KAFF, VVIP…AFSF, WQRW…VVWL, and GETW…GNLY. Residues D124 and D143 contribute to the active site. A helical membrane pass occupies residues 135 to 155; that stretch reads YFPAFNLADSAITVGAVMLAL.

Belongs to the peptidase A8 family.

The protein resides in the cell inner membrane. It carries out the reaction Release of signal peptides from bacterial membrane prolipoproteins. Hydrolyzes -Xaa-Yaa-Zaa-|-(S,diacylglyceryl)Cys-, in which Xaa is hydrophobic (preferably Leu), and Yaa (Ala or Ser) and Zaa (Gly or Ala) have small, neutral side chains.. The protein operates within protein modification; lipoprotein biosynthesis (signal peptide cleavage). In terms of biological role, this protein specifically catalyzes the removal of signal peptides from prolipoproteins. This chain is Lipoprotein signal peptidase, found in Pseudomonas paraeruginosa (strain DSM 24068 / PA7) (Pseudomonas aeruginosa (strain PA7)).